Here is a 156-residue protein sequence, read N- to C-terminus: D-aminoacyl-tRNA deacylase (156 aa).

Residues 139–140 carry the Gly-cisPro motif, important for rejection of L-amino acids motif; the sequence is GP.

It belongs to the DTD family. As to quaternary structure, homodimer.

The protein localises to the cytoplasm. The catalysed reaction is glycyl-tRNA(Ala) + H2O = tRNA(Ala) + glycine + H(+). It carries out the reaction a D-aminoacyl-tRNA + H2O = a tRNA + a D-alpha-amino acid + H(+). Functionally, an aminoacyl-tRNA editing enzyme that deacylates mischarged D-aminoacyl-tRNAs. Also deacylates mischarged glycyl-tRNA(Ala), protecting cells against glycine mischarging by AlaRS. Acts via tRNA-based rather than protein-based catalysis; rejects L-amino acids rather than detecting D-amino acids in the active site. By recycling D-aminoacyl-tRNA to D-amino acids and free tRNA molecules, this enzyme counteracts the toxicity associated with the formation of D-aminoacyl-tRNA entities in vivo and helps enforce protein L-homochirality. This is D-aminoacyl-tRNA deacylase from Marinobacter nauticus (strain ATCC 700491 / DSM 11845 / VT8) (Marinobacter aquaeolei).